A 462-amino-acid polypeptide reads, in one-letter code: Sonic hedgehog protein (462 aa).

Residues 1–23 (MLLLARCLLLVLVSSLLVCSGLA) form the signal peptide. The N-palmitoyl cysteine moiety is linked to residue Cys24. The short motif at 32-38 (KRRHPKK) is the Cardin-Weintraub element. Residues Glu89, Glu90, Asp95, Thr125, Glu126, Asp129, and Asp131 each contribute to the Ca(2+) site. Zn(2+) is bound by residues His140, Asp147, and His182. The Cholesterol glycine ester moiety is linked to residue Gly197. N-linked (GlcNAc...) asparagine glycosylation is present at Asn278. 2 disordered regions span residues 279–302 (DSAT…LGPR) and 395–414 (TDRG…GRVA). Residues 283-292 (GEPEASSGSG) are compositionally biased toward low complexity. Residues 400-412 (DSGGGDRGGGGGR) are compositionally biased toward gly residues.

The protein belongs to the hedgehog family. As to quaternary structure, multimer. Interacts with HHATL/GUP1 which negatively regulates HHAT-mediated palmitoylation of the SHH N-terminus. Interacts with BOC and CDON. Interacts with HHIP. Interacts with DISP1 via its cholesterol anchor. Interacts with SCUBE2. Interacts with glypican GPC3. Post-translationally, the C-terminal domain displays an autoproteolysis activity and a cholesterol transferase activity. Both activities result in the cleavage of the full-length protein and covalent attachment of a cholesterol moiety to the C-terminal of the newly generated N-terminal fragment (ShhN). Cholesterylation is required for the sonic hedgehog protein N-product targeting to lipid rafts and multimerization. ShhN is the active species in both local and long-range signaling, whereas the C-product (ShhC) is degraded in the endoplasmic reticulum. In terms of processing, N-palmitoylation by HHAT of ShhN is required for sonic hedgehog protein N-product multimerization and full activity. It is a prerequisite for the membrane-proximal positioning and the subsequent shedding of this N-terminal peptide. The lipidated N- and C-terminal peptides of ShhNp can be cleaved (shedding). The N-terminal palmitoylated peptide is cleaved at the Cardin-Weintraub (CW) motif site. The cleavage reduced the interactions with heparan sulfate. The cleavage is enhanced by SCUBE2.

Its subcellular location is the endoplasmic reticulum membrane. The protein localises to the golgi apparatus membrane. The protein resides in the secreted. It is found in the cell membrane. It carries out the reaction glycyl-L-cysteinyl-[protein] + cholesterol + H(+) = [protein]-C-terminal glycyl cholesterol ester + N-terminal L-cysteinyl-[protein]. Functionally, the C-terminal part of the sonic hedgehog protein precursor displays an autoproteolysis and a cholesterol transferase activity. Both activities result in the cleavage of the full-length protein into two parts (ShhN and ShhC) followed by the covalent attachment of a cholesterol moiety to the C-terminal of the newly generated ShhN. Both activities occur in the endoplasmic reticulum. Once cleaved, ShhC is degraded in the endoplasmic reticulum. In terms of biological role, the dually lipidated sonic hedgehog protein N-product (ShhNp) is a morphogen which is essential for a variety of patterning events during development. Induces ventral cell fate in the neural tube and somites. Involved in the patterning of the anterior-posterior axis of the developing limb bud. Essential for axon guidance. Binds to the patched (PTCH1) receptor, which functions in association with smoothened (SMO), to activate the transcription of target genes. In the absence of SHH, PTCH1 represses the constitutive signaling activity of SMO. This is Sonic hedgehog protein from Homo sapiens (Human).